The following is a 162-amino-acid chain: Corticoliberin-1 (162 aa).

The first 24 residues, 1-24, serve as a signal peptide directing secretion; the sequence is MKLNFLVTTVALLVAFPPPYECRA. Positions 25–119 are excised as a propeptide; it reads IDSSSNQPAT…ALDSEERERR (95 aa). F160 is modified (phenylalanine amide).

Belongs to the sauvagine/corticotropin-releasing factor/urotensin I family.

The protein resides in the secreted. Functionally, this hormone from hypothalamus regulates the release of corticotropin from pituitary gland. The sequence is that of Corticoliberin-1 (crf1) from Catostomus commersonii (White sucker).